Consider the following 144-residue polypeptide: Ribosomal RNA large subunit methyltransferase H (144 aa).

S-adenosyl-L-methionine-binding positions include leucine 63, glycine 92, and 111 to 116 (LSPMTF).

Belongs to the RNA methyltransferase RlmH family. Homodimer.

The protein resides in the cytoplasm. It catalyses the reaction pseudouridine(1915) in 23S rRNA + S-adenosyl-L-methionine = N(3)-methylpseudouridine(1915) in 23S rRNA + S-adenosyl-L-homocysteine + H(+). In terms of biological role, specifically methylates the pseudouridine at position 1915 (m3Psi1915) in 23S rRNA. The polypeptide is Ribosomal RNA large subunit methyltransferase H (Synechococcus sp. (strain CC9605)).